Here is a 977-residue protein sequence, read N- to C-terminus: Ephrin type-A receptor 2 (977 aa).

Positions 1 to 25 are cleaved as a signal peptide; sequence MELRAVGFCLALLWGCALAAAAAQG. Positions 1-205 are mediates interaction with CLDN4; sequence MELRAVGFCL…YYKKCPEMLQ (205 aa). Over 26-538 the chain is Extracellular; that stretch reads KEVVLLDFAA…STEGSANMAV (513 aa). An Eph LBD domain is found at 27–205; sequence EVVLLDFAAM…YYKKCPEMLQ (179 aa). 2 disulfides stabilise this stretch: Cys69-Cys187 and Cys104-Cys114. The region spanning 329-433 is the Fibronectin type-III 1 domain; sequence PPSAPNYLTA…TSRSFRTASV (105 aa). Asn408 and Asn436 each carry an N-linked (GlcNAc...) asparagine glycan. The Fibronectin type-III 2 domain occupies 439–530; that stretch reads EPPKVRLEDR…KVHEFQTLST (92 aa). A helical membrane pass occupies residues 539-559; sequence IGGVAVGVVLLLVLAGVGLFI. Over 560-977 the chain is Cytoplasmic; that stretch reads HRRRRNLRAR…DQVNTVGIPI (418 aa). Residues Ser571 and Ser580 each carry the phosphoserine modification. A phosphotyrosine; by autocatalysis mark is found at Tyr589 and Tyr595. The segment at 607–907 is mediates interaction with ARHGEF16; it reads TEIHPSCVAR…STSGSEGVPF (301 aa). A Protein kinase domain is found at 614–876; that stretch reads VARQKVIGAG…DIVSILDKLI (263 aa). Position 620-628 (620-628) interacts with ATP; it reads IGAGEFGEV. Tyr629 is subject to Phosphotyrosine. Position 647 (Lys647) interacts with ATP. Thr648 carries the post-translational modification Phosphothreonine. Tyr736 is modified (phosphotyrosine; by autocatalysis). The active-site Proton acceptor is Asp740. At Tyr773 the chain carries Phosphotyrosine; by autocatalysis. Phosphoserine occurs at positions 870, 893, 898, and 902. A negatively regulates interaction with ARHGEF16 region spans residues 887 to 977; sequence DFDPRVSIRL…DQVNTVGIPI (91 aa). An SAM domain is found at 905–969; the sequence is VPFRTVSEWL…AYSLLGLKDQ (65 aa). Residue Tyr922 is modified to Phosphotyrosine; by autocatalysis. Position 931 is a phosphotyrosine (Tyr931). The PDZ-binding motif lies at 975–977; the sequence is IPI.

The protein belongs to the protein kinase superfamily. Tyr protein kinase family. Ephrin receptor subfamily. Homodimer. Interacts with INPPL1; regulates activated EPHA2 endocytosis and degradation. Interacts (inactivated form) with PTK2/FAK1 and interacts (EFNA1 ligand-activated form) with PTPN11; regulates integrin-mediated adhesion. Interacts with ARHGEF16, DOCK4 and ELMO2; mediates ligand-independent activation of RAC1 which stimulates cell migration. Interacts with CLDN4; phosphorylates CLDN4 and may regulate tight junctions. Interacts with ACP1. Interacts with CEMIP. Interacts with NCK1; may regulate EPHA2 activity in cell migration and adhesion. Interacts with SLA. Interacts (phosphorylated form) with VAV2, VAV3 and PI3-kinase p85 subunit (PIK3R1, PIK3R2 or PIK3R3); critical for the EFNA1-induced activation of RAC1 which stimulates cell migration. Interacts with ANKS1A. Interacts with TIMD4. In terms of processing, autophosphorylates. Phosphorylated at Ser-898 by PKB; serum-induced phosphorylation which targets EPHA2 to the cell leading edge and stimulates cell migration. Phosphorylation by PKB is inhibited by EFNA1-activated EPHA2 which regulates PKB activity via a reciprocal regulatory loop. Phosphorylated on tyrosine upon binding and activation by EFNA1. Phosphorylated residues Tyr-589 and Tyr-595 are required for binding VAV2 and VAV3 while phosphorylated residues Tyr-736 and Tyr-931 are required for binding PI3-kinase p85 subunit (PIK3R1, PIK3R2 or PIK3R3). These phosphorylated residues are critical for recruitment of VAV2 and VAV3 and PI3-kinase p85 subunit which transduce downstream signaling to activate RAC1 GTPase and cell migration. Dephosphorylation of Tyr-931 by PTPRF prevents the interaction of EPHA2 with NCK1. Phosphorylated at Ser-898 in response to TNF by RPS6KA1 and RPS6KA3; RPS6KA-EPHA2 signaling pathway controls cell migration. Phosphorylated at Ser-898 by PKA; blocks cell retraction induced by EPHA2 kinase activity. Dephosphorylated by ACP1. Ubiquitinated by CHIP/STUB1. Ubiquitination is regulated by the HSP90 chaperone and regulates the receptor stability and activity through proteasomal degradation. ANKS1A prevents ubiquitination and degradation. As to expression, expressed in the lung, intestine and liver. Expressed in myogenic progenitor cells.

It localises to the cell membrane. The protein resides in the cell projection. It is found in the ruffle membrane. The protein localises to the lamellipodium membrane. Its subcellular location is the cell junction. It localises to the focal adhesion. It catalyses the reaction L-tyrosyl-[protein] + ATP = O-phospho-L-tyrosyl-[protein] + ADP + H(+). Functionally, receptor tyrosine kinase which binds promiscuously membrane-bound ephrin-A family ligands residing on adjacent cells, leading to contact-dependent bidirectional signaling into neighboring cells. The signaling pathway downstream of the receptor is referred to as forward signaling while the signaling pathway downstream of the ephrin ligand is referred to as reverse signaling. Activated by the ligand ephrin-A1/EFNA1 regulates migration, integrin-mediated adhesion, proliferation and differentiation of cells. Regulates cell adhesion and differentiation through DSG1/desmoglein-1 and inhibition of the ERK1/ERK2 signaling pathway. May also participate in UV radiation-induced apoptosis and have a ligand-independent stimulatory effect on chemotactic cell migration. During development, may function in distinctive aspects of pattern formation and subsequently in development of several fetal tissues. Involved for instance in angiogenesis, in early hindbrain development and epithelial proliferation and branching morphogenesis during mammary gland development. Engaged by the ligand ephrin-A5/EFNA5 may regulate lens fiber cells shape and interactions and be important for lens transparency development and maintenance. With ephrin-A2/EFNA2 may play a role in bone remodeling through regulation of osteoclastogenesis and osteoblastogenesis. The sequence is that of Ephrin type-A receptor 2 (Epha2) from Mus musculus (Mouse).